Here is a 262-residue protein sequence, read N- to C-terminus: Tryptophan synthase alpha chain (262 aa).

Catalysis depends on proton acceptor residues Glu-48 and Asp-59.

It belongs to the TrpA family. As to quaternary structure, tetramer of two alpha and two beta chains.

It carries out the reaction (1S,2R)-1-C-(indol-3-yl)glycerol 3-phosphate + L-serine = D-glyceraldehyde 3-phosphate + L-tryptophan + H2O. It participates in amino-acid biosynthesis; L-tryptophan biosynthesis; L-tryptophan from chorismate: step 5/5. In terms of biological role, the alpha subunit is responsible for the aldol cleavage of indoleglycerol phosphate to indole and glyceraldehyde 3-phosphate. This is Tryptophan synthase alpha chain from Helicobacter pylori (strain Shi470).